We begin with the raw amino-acid sequence, 792 residues long: MDLNQRKEKKGQHVGCCGSRTDLSADTVELIERMDRLAENQATASMSIVALPSSFQESNSSDRCRKYCSSDEDSDTCIHGSANASTNATTNSSTNATTTASINVRTSATTTASINVRTSATTTESTNSNTNATTTESTNSSTNATTTASINVRTSATTTESTNSSTNATTTASINVRTSATTTESTNSSTNATTTASINVRTSATTTESTNSNTNASTNATTNSSTNATTTASTNVRTSATTNATTNSSTNATTTASTNVRTSATTTASTNVRTSATTTASINVRTSATTTESINSSTNATTTESTNSNTSATTTESTDSNTNATTTASINVRTSATTTESTNSNTSATTTESTDSNTSATTTASTNSSTNATTTASTNSSTNATTTESTNASAKEDANKDGNAEDNRFHPVTDINKESYKRKGSQMVFLERKKLKAQFPNTSENMNVLQFLGFRSDEIKHLFLYGIDIYFCPEGVFTQYGLCKGCQKMFGLCVCWAGQKVSYRRIAWEALAVERMLRNDEEYKEYLEDIEPYHGDPVGYLKYFSVKRREIYSQIQRNYAWYLAITRRRETISVLDSTRGKQGSQVFRMSGRQIKELYYKVWSNLRESKTEVLQYFLNWDEKKCREEWEAKDDTVFVEALEKVGVFQRLRSMTSAGLQGPQYVKLQFSRHHRQLRSRYELSLGMHLRDQLALGVTPSKVPHWTAFLSMLIGLFYNKTFRQKLEYLLEQISEMWLLPHWLDLANVEVLAADNTRVPLYMLMVAVHKELDSDDVPDGRFDIILLCRDSSREVGE.

25 tandem repeats follow at residues 91-102 (NSSTNATTTASI), 103-114 (NVRTSATTTASI), 115-126 (NVRTSATTTEST), 127-138 (NSNTNATTTEST), 139-150 (NSSTNATTTASI), 151-162 (NVRTSATTTEST), 163-174 (NSSTNATTTASI), 175-186 (NVRTSATTTEST), 187-198 (NSSTNATTTASI), 199-210 (NVRTSATTTEST), 211-222 (NSNTNASTNATT), 223-234 (NSSTNATTTAST), 235-246 (NVRTSATTNATT), 247-258 (NSSTNATTTAST), 259-270 (NVRTSATTTAST), 271-282 (NVRTSATTTASI), 283-294 (NVRTSATTTESI), 295-306 (NSSTNATTTEST), 307-318 (NSNTSATTTEST), 319-330 (DSNTNATTTASI), 331-342 (NVRTSATTTEST), 343-354 (NSNTSATTTEST), 355-366 (DSNTSATTTAST), 367-378 (NSSTNATTTAST), and 379-390 (NSSTNATTTEST). Residues 91-390 (NSSTNATTTA…STNATTTEST (300 aa)) are 25 X 12 AA tandem repeat of N-[SV]-[RS]-T-[NS]-A-T-T-T-[AE]-[ST]-[IT]. Residues 113-417 (SINVRTSATT…RFHPVTDINK (305 aa)) are disordered. The segment covering 118–393 (TSATTTESTN…ATTTESTNAS (276 aa)) has biased composition (low complexity). The span at 394 to 417 (AKEDANKDGNAEDNRFHPVTDINK) shows a compositional bias: basic and acidic residues.

This is an uncharacterized protein from Saccharomyces cerevisiae (strain ATCC 204508 / S288c) (Baker's yeast).